The sequence spans 509 residues: NADH dehydrogenase (509 aa).

Residues 1–183 (MVLDANIKAQ…YLNGESFGSG (183 aa)) are membrane-binding. Residues 184 to 509 (RMTLEEILAK…LGAFDYLIRN (326 aa)) form a catalytic region. 210–241 (DVLVVGGGPAGASAAIYTARKGIRTGVVAERF) provides a ligand contact to FAD. Cysteines 337 and 340 form a disulfide. An NAD(+)-binding site is contributed by 349-379 (DVAVIGGGNSGIEAAIDLAGIVNHVTVLEFA). 469 to 479 (TSVPGLFAAGD) is a binding site for FAD.

It belongs to the class-II pyridine nucleotide-disulfide oxidoreductase family. In terms of assembly, homodimer. FAD is required as a cofactor.

It localises to the cell membrane. The catalysed reaction is a ubiquinone + NADH + 5 H(+)(in) = a ubiquinol + NAD(+) + 4 H(+)(out). In terms of biological role, transfer of electrons from NADH to the respiratory chain. The immediate electron acceptor for the enzyme is believed to be ubiquinone. This is NADH dehydrogenase (ahpF) from Bacillus subtilis (strain 168).